Reading from the N-terminus, the 813-residue chain is Tax1-binding protein 1 homolog (813 aa).

Residues serine 124, serine 138, and serine 225 each carry the phosphoserine modification. The stretch at 144–596 (TTKAGLLELK…SYSLQLAEKD (453 aa)) forms a coiled coil. The oligomerization stretch occupies residues 320 to 420 (EEIGKLQSCL…ELQLHAVKTD (101 aa)). A Phosphoserine; by IKKA modification is found at serine 618. Phosphoserine is present on serine 631. The tract at residues 667 to 732 (AHETRDGADG…NVPIPPDPAN (66 aa)) is disordered. A Phosphoserine; by IKKA modification is found at serine 692. UBZ1-type zinc fingers lie at residues 751-777 (HKKC…VESH) and 778-804 (WKVC…VQTH). Cysteine 754, cysteine 757, histidine 773, histidine 777, cysteine 781, cysteine 784, histidine 800, and histidine 804 together coordinate Zn(2+).

Homooligomer. Interacts with TNFAIP3. Interacts with STARD13. Interacts with MYO6. Interacts with TOM1; the interaction is indirect and is mediated by MYO6, which acts as a bridge between TOM1 and TAX1BP1. Interacts with MAVS; this interaction induces MAVS polyubiquitination. Interacts with TNIP1. Interacts with TRAF6; this interaction mediates deubiquitination of TRAF6 and inhibition of NF-kappa-B activation. Interacts with RIPK1; this interaction negatively regulates RIPK1 ubiquitination. Interacts with NBR1. Interacts with TBK1. Interacts with RB1CC1. Interacts with SQSTM1. Interacts with AZI2. Interacts with TICAM1 and TRIM32; these interactions target TICAM1 to TAX1BP1-mediated selective autophagic degradation. Post-translationally, phosphorylated in the C-terminal region by CHUK/IKKA leading to NF-kappa-B signaling down-regulation.

It localises to the cytoplasm. The protein resides in the mitochondrion. Its subcellular location is the preautophagosomal structure. It is found in the cytoplasmic vesicle. The protein localises to the autophagosome. Its function is as follows. Ubiquitin-binding adapter that participates in inflammatory, antiviral and innate immune processes as well as selective autophagy regulation. Plays a key role in the negative regulation of NF-kappa-B and IRF3 signalings by acting as an adapter for the ubiquitin-editing enzyme A20/TNFAIP3 to bind and inactivate its substrates. Disrupts the interactions between the E3 ubiquitin ligase TRAF3 and TBK1/IKBKE to attenuate 'Lys63'-linked polyubiquitination of TBK1 and thereby IFN-beta production. Also recruits A20/TNFAIP3 to ubiquitinated signaling proteins TRAF6 and RIPK1, leading to their deubiquitination and disruption of IL-1 and TNF-induced NF-kappa-B signaling pathways. Inhibits virus-induced apoptosis by inducing the 'Lys-48'-linked polyubiquitination and degradation of MAVS via recruitment of the E3 ligase ITCH, thereby attenuating MAVS-mediated apoptosis signaling. As a macroautophagy/autophagy receptor, facilitates the xenophagic clearance of pathogenic bacteria such as Salmonella typhimurium and Mycobacterium tuberculosis. Upon NBR1 recruitment to the SQSTM1-ubiquitin condensates, acts as the major recruiter of RB1CC1 to these ubiquitin condensates to promote their autophagic degradation. Mediates the autophagic degradation of other substrates including TICAM1. This Rattus norvegicus (Rat) protein is Tax1-binding protein 1 homolog (Tax1bp1).